The following is a 933-amino-acid chain: Serine/threonine-protein kinase PknD (933 aa).

In terms of domain architecture, Protein kinase spans 4 to 291 (YDIIRMIGKG…ALKADIEQHL (288 aa)). ATP is bound by residues 10 to 18 (IGKGGMGEV) and lysine 33. Aspartate 138 functions as the Proton acceptor in the catalytic mechanism.

The protein belongs to the protein kinase superfamily. Ser/Thr protein kinase family. Autophosphorylated on serine and threonine residues.

The enzyme catalyses L-seryl-[protein] + ATP = O-phospho-L-seryl-[protein] + ADP + H(+). It carries out the reaction L-threonyl-[protein] + ATP = O-phospho-L-threonyl-[protein] + ADP + H(+). Its function is as follows. Together with the serine/threonine kinase Pkn1, may play a role in the specific interactions with host proteins during intracellular growth. The sequence is that of Serine/threonine-protein kinase PknD from Chlamydia abortus (strain DSM 27085 / S26/3) (Chlamydophila abortus).